The chain runs to 326 residues: MTHSCRLSVAPMLDWTDRHCRYFHRLMTKETLLYTEMVTTGAIIHGKGDFLAYNEEEHPLALQLGGSNPEDLAKCAKLAQERGYDEINLNVGCPSDRVQNGRFGACLMAEPQLVADCVAAMKEVVDVPVTVKTRIGIDDQDSYEFLTDFVSIVSEKGGCEQFTIHARKAWLSGLSPKENREIPPLDYPRAYQLKQDFSHLTIAINGGVKSLEEAKVHLQHLDGVMIGREAYQSPYLLASVDQELFGSNAPVKKRSEIVEEMYPYIEAQLAKGAYLGHITRHMLGLFQNMPGARQWRRHISENAHKPGSGLEVLQDALAKIPKELNV.

FMN-binding positions include 11–13 and Gln-63; that span reads PML. Residue Cys-93 is the Proton donor of the active site. FMN-binding positions include Lys-132, His-165, 205-207, and 227-228; these read NGG and GR.

This sequence belongs to the Dus family. DusA subfamily. The cofactor is FMN.

It carries out the reaction 5,6-dihydrouridine(20) in tRNA + NADP(+) = uridine(20) in tRNA + NADPH + H(+). The enzyme catalyses 5,6-dihydrouridine(20) in tRNA + NAD(+) = uridine(20) in tRNA + NADH + H(+). The catalysed reaction is 5,6-dihydrouridine(20a) in tRNA + NADP(+) = uridine(20a) in tRNA + NADPH + H(+). It catalyses the reaction 5,6-dihydrouridine(20a) in tRNA + NAD(+) = uridine(20a) in tRNA + NADH + H(+). In terms of biological role, catalyzes the synthesis of 5,6-dihydrouridine (D), a modified base found in the D-loop of most tRNAs, via the reduction of the C5-C6 double bond in target uridines. Specifically modifies U20 and U20a in tRNAs. The polypeptide is tRNA-dihydrouridine(20/20a) synthase (Vibrio parahaemolyticus serotype O3:K6 (strain RIMD 2210633)).